We begin with the raw amino-acid sequence, 72 residues long: MGKGWNASFHLGRRERLRQEVLHRVAGGPRPAPRDYTGHDGTHGSYYMKGWQSVDMPEILHHCLLYREKHYV.

It localises to the host cytoplasm. This is an uncharacterized protein from Enterobacteriaceae (Bacteriophage Mu).